We begin with the raw amino-acid sequence, 156 residues long: ACCSTSFCGFPICSSVGTCGSSCGQPTCSQTSCCQPTSIQTSCCQPISIQTSCCQPTCLQTSGCETGCGIGGSIGYDQVGSSGAVSSRTRWCRPDCRVEGTSLPPCCVVSCTSPSCCQLYYAQASCCRPSYCGQSCCRPACCCQPTCIEPVCEPTC.

Residue Ala1 is modified to N-acetylalanine. 4 consecutive repeats follow at residues 26 to 35 (PTCSQTSCCQ), 36 to 45 (PTSIQTSCCQ), 46 to 55 (PISIQTSCCQ), and 56 to 65 (PTCLQTSGCE).

The keratin products of mammalian epidermal derivatives such as wool and hair consist of microfibrils embedded in a rigid matrix of other proteins. The matrix proteins include the high-sulfur and high-tyrosine keratins, having molecular weights of 6-20 kDa, whereas the microfibrils contain the larger, low-sulfur keratins (40-56 kDa). This chain is Keratin, high-sulfur matrix protein, B2B, found in Ovis aries (Sheep).